We begin with the raw amino-acid sequence, 468 residues long: 3-isopropylmalate dehydratase large subunit (468 aa).

Residues C347, C407, and C410 each coordinate [4Fe-4S] cluster.

Belongs to the aconitase/IPM isomerase family. LeuC type 1 subfamily. In terms of assembly, heterodimer of LeuC and LeuD. [4Fe-4S] cluster is required as a cofactor.

The catalysed reaction is (2R,3S)-3-isopropylmalate = (2S)-2-isopropylmalate. It participates in amino-acid biosynthesis; L-leucine biosynthesis; L-leucine from 3-methyl-2-oxobutanoate: step 2/4. Its function is as follows. Catalyzes the isomerization between 2-isopropylmalate and 3-isopropylmalate, via the formation of 2-isopropylmaleate. The polypeptide is 3-isopropylmalate dehydratase large subunit (Synechococcus sp. (strain CC9311)).